Reading from the N-terminus, the 179-residue chain is METNKPTLYWSLLMFKDWNFYIASTLKGLVFVGSQNKPIEELFEWARKRFPGSLLVEDDDKLEPYAVEITQYLEGKRKNFTVPVEYAGTQFQLAVWNALCEIPYGQTKSYSDIANDINKPAAVRAVGAAIGANPVLITVPCHRVIGKNGSLTGYRGGFEMKTLLLDLEKRASSEMDVPH.

The Nucleophile; methyl group acceptor role is filled by Cys141.

This sequence belongs to the MGMT family.

The enzyme catalyses a 6-O-methyl-2'-deoxyguanosine in DNA + L-cysteinyl-[protein] = S-methyl-L-cysteinyl-[protein] + a 2'-deoxyguanosine in DNA. The catalysed reaction is a 4-O-methyl-thymidine in DNA + L-cysteinyl-[protein] = a thymidine in DNA + S-methyl-L-cysteinyl-[protein]. Functionally, involved in the cellular defense against the biological effects of O6-methylguanine (O6-MeG) and O4-methylthymine (O4-MeT) in DNA. Repairs the methylated nucleobase in DNA by stoichiometrically transferring the methyl group to a cysteine residue in the enzyme. This is a suicide reaction: the enzyme is irreversibly inactivated. In Bacillus subtilis (strain 168), this protein is Methylated-DNA--protein-cysteine methyltransferase, inducible (adaB).